The following is a 248-amino-acid chain: Probable transcriptional regulatory protein Ecaj_0351 (248 aa).

A disordered region spans residues 1–21; that stretch reads MAGHSQFANIKHRKGAQDAKR.

This sequence belongs to the TACO1 family.

It is found in the cytoplasm. The sequence is that of Probable transcriptional regulatory protein Ecaj_0351 from Ehrlichia canis (strain Jake).